A 181-amino-acid chain; its full sequence is MPLIIGIDPGSRLTGYGIIEKNGNELRFIDAGTIRTESQDMPERLKRIFAGVERIVKFHGPTQAAVEQVFMAQNPDSALKLGQARGAAIAALVNLDLEVAEYTARQIKQSVVGYGAADKEQVQMMVMRILNLTIKPQSDAADALAAAICHAHASGSMSKMAVLNALGGMARGRSRSSTRRR.

Active-site residues include Asp8, Glu67, and Asp139. 3 residues coordinate Mg(2+): Asp8, Glu67, and Asp139.

The protein belongs to the RuvC family. As to quaternary structure, homodimer which binds Holliday junction (HJ) DNA. The HJ becomes 2-fold symmetrical on binding to RuvC with unstacked arms; it has a different conformation from HJ DNA in complex with RuvA. In the full resolvosome a probable DNA-RuvA(4)-RuvB(12)-RuvC(2) complex forms which resolves the HJ. The cofactor is Mg(2+).

It localises to the cytoplasm. It carries out the reaction Endonucleolytic cleavage at a junction such as a reciprocal single-stranded crossover between two homologous DNA duplexes (Holliday junction).. Its function is as follows. The RuvA-RuvB-RuvC complex processes Holliday junction (HJ) DNA during genetic recombination and DNA repair. Endonuclease that resolves HJ intermediates. Cleaves cruciform DNA by making single-stranded nicks across the HJ at symmetrical positions within the homologous arms, yielding a 5'-phosphate and a 3'-hydroxyl group; requires a central core of homology in the junction. The consensus cleavage sequence is 5'-(A/T)TT(C/G)-3'. Cleavage occurs on the 3'-side of the TT dinucleotide at the point of strand exchange. HJ branch migration catalyzed by RuvA-RuvB allows RuvC to scan DNA until it finds its consensus sequence, where it cleaves and resolves the cruciform DNA. The sequence is that of Crossover junction endodeoxyribonuclease RuvC from Acinetobacter baylyi (strain ATCC 33305 / BD413 / ADP1).